A 225-amino-acid chain; its full sequence is Ribose-5-phosphate isomerase A (225 aa).

Residues T32–T35, D85–D88, and K98–G101 each bind substrate. The active-site Proton acceptor is the E107. Residue K125 coordinates substrate.

It belongs to the ribose 5-phosphate isomerase family. Homodimer.

It catalyses the reaction aldehydo-D-ribose 5-phosphate = D-ribulose 5-phosphate. Its pathway is carbohydrate degradation; pentose phosphate pathway; D-ribose 5-phosphate from D-ribulose 5-phosphate (non-oxidative stage): step 1/1. Functionally, catalyzes the reversible conversion of ribose-5-phosphate to ribulose 5-phosphate. This is Ribose-5-phosphate isomerase A from Marinobacter nauticus (strain ATCC 700491 / DSM 11845 / VT8) (Marinobacter aquaeolei).